The following is a 522-amino-acid chain: Nuclear pore glycoprotein p62 (522 aa).

Ser2 bears the N-acetylserine mark. 5 consecutive repeat copies span residues 6 to 7, 44 to 45, 76 to 77, 114 to 115, and 142 to 143. A 5 X 2 AA repeats of F-G region spans residues 6-143; that stretch reads FGGTGAPTGG…GTAPTGFVFG (138 aa). A compositionally biased stretch (polar residues) spans 169–179; it reads SGFNIGSAGNS. 2 disordered regions span residues 169-215 and 260-288; these read SGFN…ATIT and APGAASGTSTTTSTAATATATTTSSSSTT. Low complexity-rich tracts occupy residues 180-215 and 262-288; these read AQPTAPATLPFTPATPAATTAGATQPAAPTPTATIT and GAASGTSTTTSTAATATATTTSSSSTT. Residues 328 to 458 form a required for centrosome localization region; that stretch reads MTYAQLESLI…QDLKDIIEHL (131 aa). Residues 328–458 adopt a coiled-coil conformation; the sequence is MTYAQLESLI…QDLKDIIEHL (131 aa). Thr373 carries an O-linked (GlcNAc) threonine glycan. 2 positions are modified to phosphoserine: Ser408 and Ser418. An O-linked (GlcNAc) serine glycan is attached at Ser468.

It belongs to the nucleoporin NSP1/NUP62 family. Component of the p62 complex, a complex at least composed of NUP62, NUP54, and NUP58. Interacts with NUP88. Interacts with NUTF2. Interacts with HIKESHI. Interacts with OSBPL8. Interacts with CAPG. Interacts with SAS6 and TUBG1 at the centrosome. Interacts with MCM3AP isoform GANP. As to quaternary structure, (Microbial infection) Interacts with Epstein-barr virus BGLF4; this interaction allows BGLF4 nuclear entry. In terms of processing, O-glycosylated. Contains about 10 N-acetylglucosamine side chain sites predicted for the entire protein, among which only one in the C-terminal. The inner channel of the NPC has a different redox environment from the cytoplasm and allows the formation of interchain disulfide bonds between some nucleoporins, the significant increase of these linkages upon oxidative stress reduces the permeability of the NPC.

It localises to the nucleus. The protein resides in the nuclear pore complex. It is found in the cytoplasm. Its subcellular location is the cytoskeleton. The protein localises to the spindle pole. It localises to the nucleus envelope. The protein resides in the microtubule organizing center. It is found in the centrosome. Functionally, essential component of the nuclear pore complex. The N-terminal is probably involved in nucleocytoplasmic transport. The C-terminal is involved in protein-protein interaction probably via coiled-coil formation, promotes its association with centrosomes and may function in anchorage of p62 to the pore complex. Plays a role in mitotic cell cycle progression by regulating centrosome segregation, centriole maturation and spindle orientation. It might be involved in protein recruitment to the centrosome after nuclear breakdown. In Homo sapiens (Human), this protein is Nuclear pore glycoprotein p62 (NUP62).